The primary structure comprises 86 residues: Probable weak neurotoxin NNAM1 (86 aa).

The first 21 residues, 1-21 (MKTLLLSLVVVTIVCLDLGYT), serve as a signal peptide directing secretion. 5 cysteine pairs are disulfide-bonded: cysteine 24/cysteine 45, cysteine 27/cysteine 32, cysteine 38/cysteine 63, cysteine 67/cysteine 78, and cysteine 79/cysteine 84.

It belongs to the three-finger toxin family. Ancestral subfamily. Orphan group II sub-subfamily. As to expression, expressed by the venom gland.

It localises to the secreted. In terms of biological role, binds with low affinity to muscular (alpha-1-beta-1-delta-epsilon/CHRNA1-CHRNB1-CHRND-CHRNE) and very low affinity to neuronal (alpha-7/CHRNA7) nicotinic acetylcholine receptor (nAChR). The sequence is that of Probable weak neurotoxin NNAM1 from Naja atra (Chinese cobra).